A 222-amino-acid polypeptide reads, in one-letter code: ATP-dependent dethiobiotin synthetase BioD (222 aa).

12–17 (DAGKTV) contacts ATP. Residue T16 participates in Mg(2+) binding. Residue K37 is part of the active site. Residue S41 coordinates substrate. Residues D54, 116–119 (EGAG), 176–177 (VQ), 206–208 (PYL), and E213 contribute to the ATP site. Positions 54 and 116 each coordinate Mg(2+).

Belongs to the dethiobiotin synthetase family. In terms of assembly, homodimer. Mg(2+) is required as a cofactor.

The protein resides in the cytoplasm. The catalysed reaction is (7R,8S)-7,8-diammoniononanoate + CO2 + ATP = (4R,5S)-dethiobiotin + ADP + phosphate + 3 H(+). It participates in cofactor biosynthesis; biotin biosynthesis; biotin from 7,8-diaminononanoate: step 1/2. Its function is as follows. Catalyzes a mechanistically unusual reaction, the ATP-dependent insertion of CO2 between the N7 and N8 nitrogen atoms of 7,8-diaminopelargonic acid (DAPA, also called 7,8-diammoniononanoate) to form a ureido ring. This Idiomarina loihiensis (strain ATCC BAA-735 / DSM 15497 / L2-TR) protein is ATP-dependent dethiobiotin synthetase BioD.